We begin with the raw amino-acid sequence, 71 residues long: Small ribosomal subunit protein bS21 (71 aa).

Belongs to the bacterial ribosomal protein bS21 family.

This is Small ribosomal subunit protein bS21 from Pseudoalteromonas atlantica (strain T6c / ATCC BAA-1087).